The primary structure comprises 121 residues: DNA-directed RNA polymerase subunit omega (121 aa).

This sequence belongs to the RNA polymerase subunit omega family. As to quaternary structure, the RNAP catalytic core consists of 2 alpha, 1 beta, 1 beta' and 1 omega subunit. When a sigma factor is associated with the core the holoenzyme is formed, which can initiate transcription.

It carries out the reaction RNA(n) + a ribonucleoside 5'-triphosphate = RNA(n+1) + diphosphate. Its function is as follows. Promotes RNA polymerase assembly. Latches the N- and C-terminal regions of the beta' subunit thereby facilitating its interaction with the beta and alpha subunits. This Syntrophobacter fumaroxidans (strain DSM 10017 / MPOB) protein is DNA-directed RNA polymerase subunit omega.